Reading from the N-terminus, the 296-residue chain is Ribosomal protein L11 methyltransferase (296 aa).

S-adenosyl-L-methionine-binding residues include Thr-145, Gly-166, Asp-188, and Asn-230.

It belongs to the methyltransferase superfamily. PrmA family.

It is found in the cytoplasm. The enzyme catalyses L-lysyl-[protein] + 3 S-adenosyl-L-methionine = N(6),N(6),N(6)-trimethyl-L-lysyl-[protein] + 3 S-adenosyl-L-homocysteine + 3 H(+). Methylates ribosomal protein L11. The sequence is that of Ribosomal protein L11 methyltransferase from Histophilus somni (strain 129Pt) (Haemophilus somnus).